The following is a 533-amino-acid chain: Phosphoenolpyruvate carboxykinase (ATP) (533 aa).

Residues R59, Y199, and K205 each contribute to the substrate site. ATP-binding positions include K205, H224, and 240-248; that span reads GLSGTGKTT. Mn(2+) is bound by residues K205 and H224. Residue D261 coordinates Mn(2+). Residues E289, R325, 441-442, and T447 contribute to the ATP site; that span reads RI. R325 is a binding site for substrate.

This sequence belongs to the phosphoenolpyruvate carboxykinase (ATP) family. Monomer. It depends on Mn(2+) as a cofactor.

It is found in the cytoplasm. The enzyme catalyses oxaloacetate + ATP = phosphoenolpyruvate + ADP + CO2. It participates in carbohydrate biosynthesis; gluconeogenesis. Functionally, involved in the gluconeogenesis. Catalyzes the conversion of oxaloacetate (OAA) to phosphoenolpyruvate (PEP) through direct phosphoryl transfer between the nucleoside triphosphate and OAA. This chain is Phosphoenolpyruvate carboxykinase (ATP), found in Idiomarina loihiensis (strain ATCC BAA-735 / DSM 15497 / L2-TR).